Consider the following 837-residue polypeptide: Protein translocase subunit SecA 1 (837 aa).

Residues Q85, 103–107, and D492 each bind ATP; that span reads GEGKT. Residues 791–837 form a disordered region; sequence KGEAINPAEGKPEAKRQPIRKDQHIGRNDPCPCGSGKKYKNCHGKEA. Basic and acidic residues predominate over residues 800-817; that stretch reads GKPEAKRQPIRKDQHIGR. Zn(2+) is bound by residues C821, C823, C832, and H833. Residues 827-837 are compositionally biased toward basic residues; the sequence is KKYKNCHGKEA.

Belongs to the SecA family. Monomer and homodimer. Part of the essential Sec protein translocation apparatus which comprises SecA, SecYEG and auxiliary proteins SecDF. Other proteins may also be involved. It depends on Zn(2+) as a cofactor.

Its subcellular location is the cell membrane. It localises to the cytoplasm. It catalyses the reaction ATP + H2O + cellular proteinSide 1 = ADP + phosphate + cellular proteinSide 2.. In terms of biological role, part of the Sec protein translocase complex. Interacts with the SecYEG preprotein conducting channel. Has a central role in coupling the hydrolysis of ATP to the transfer of proteins into and across the cell membrane, serving as an ATP-driven molecular motor driving the stepwise translocation of polypeptide chains across the membrane. The polypeptide is Protein translocase subunit SecA 1 (Listeria monocytogenes serovar 1/2a (strain ATCC BAA-679 / EGD-e)).